The sequence spans 165 residues: Small ribosomal subunit protein uS5 (165 aa).

An S5 DRBM domain is found at 10 to 73; sequence LKEKVVFINR…EDAKKNLVEV (64 aa).

This sequence belongs to the universal ribosomal protein uS5 family. As to quaternary structure, part of the 30S ribosomal subunit. Contacts proteins S4 and S8.

With S4 and S12 plays an important role in translational accuracy. Its function is as follows. Located at the back of the 30S subunit body where it stabilizes the conformation of the head with respect to the body. In Clostridium acetobutylicum (strain ATCC 824 / DSM 792 / JCM 1419 / IAM 19013 / LMG 5710 / NBRC 13948 / NRRL B-527 / VKM B-1787 / 2291 / W), this protein is Small ribosomal subunit protein uS5.